We begin with the raw amino-acid sequence, 412 residues long: Serine hydroxymethyltransferase (412 aa).

Residues L114 and 118 to 120 contribute to the (6S)-5,6,7,8-tetrahydrofolate site; that span reads GHL. K223 carries the post-translational modification N6-(pyridoxal phosphate)lysine.

The protein belongs to the SHMT family. Homodimer. Pyridoxal 5'-phosphate is required as a cofactor.

Its subcellular location is the cytoplasm. The enzyme catalyses (6R)-5,10-methylene-5,6,7,8-tetrahydrofolate + glycine + H2O = (6S)-5,6,7,8-tetrahydrofolate + L-serine. The protein operates within one-carbon metabolism; tetrahydrofolate interconversion. It participates in amino-acid biosynthesis; glycine biosynthesis; glycine from L-serine: step 1/1. Functionally, catalyzes the reversible interconversion of serine and glycine with tetrahydrofolate (THF) serving as the one-carbon carrier. This reaction serves as the major source of one-carbon groups required for the biosynthesis of purines, thymidylate, methionine, and other important biomolecules. Also exhibits THF-independent aldolase activity toward beta-hydroxyamino acids, producing glycine and aldehydes, via a retro-aldol mechanism. This is Serine hydroxymethyltransferase from Mesoplasma florum (strain ATCC 33453 / NBRC 100688 / NCTC 11704 / L1) (Acholeplasma florum).